The sequence spans 254 residues: tRNA uridine(34) hydroxylase (254 aa).

A Rhodanese domain is found at 123-217 (QDPNVILLDT…YLESIPEGES (95 aa)). Catalysis depends on cysteine 177, which acts as the Cysteine persulfide intermediate.

This sequence belongs to the TrhO family.

It carries out the reaction uridine(34) in tRNA + AH2 + O2 = 5-hydroxyuridine(34) in tRNA + A + H2O. Functionally, catalyzes oxygen-dependent 5-hydroxyuridine (ho5U) modification at position 34 in tRNAs. This Legionella pneumophila (strain Lens) protein is tRNA uridine(34) hydroxylase.